The following is a 315-amino-acid chain: Porphobilinogen deaminase (315 aa).

Position 245 is an S-(dipyrrolylmethanemethyl)cysteine (C245).

The protein belongs to the HMBS family. In terms of assembly, monomer. It depends on dipyrromethane as a cofactor.

It catalyses the reaction 4 porphobilinogen + H2O = hydroxymethylbilane + 4 NH4(+). Its pathway is porphyrin-containing compound metabolism; protoporphyrin-IX biosynthesis; coproporphyrinogen-III from 5-aminolevulinate: step 2/4. It functions in the pathway porphyrin-containing compound metabolism; chlorophyll biosynthesis. Its function is as follows. Tetrapolymerization of the monopyrrole PBG into the hydroxymethylbilane pre-uroporphyrinogen in several discrete steps. The chain is Porphobilinogen deaminase from Prochlorococcus marinus (strain NATL2A).